The sequence spans 129 residues: Large ribosomal subunit protein bL12c (129 aa).

It belongs to the bacterial ribosomal protein bL12 family. As to quaternary structure, homodimer. Part of the ribosomal stalk of the 50S ribosomal subunit. Forms a multimeric L10(L12)X complex, where L10 forms an elongated spine to which 2 to 4 L12 dimers bind in a sequential fashion. Binds GTP-bound translation factors.

It is found in the plastid. The protein localises to the chloroplast. Forms part of the ribosomal stalk which helps the ribosome interact with GTP-bound translation factors. Is thus essential for accurate translation. This Oltmannsiellopsis viridis (Marine flagellate) protein is Large ribosomal subunit protein bL12c.